The sequence spans 355 residues: D-alanine--D-alanine ligase (355 aa).

In terms of domain architecture, ATP-grasp spans 143–350; sequence KTIFSNLKIP…IEQLVAKLVD (208 aa). Residue 178–233 coordinates ATP; sequence LKKLNFPFFVKPSNSGSSLGISKVINESEILQSLEKAQKIDSRILVEEGLEVREIE. 3 residues coordinate Mg(2+): Asp-303, Glu-317, and Asn-319.

Belongs to the D-alanine--D-alanine ligase family. Mg(2+) serves as cofactor. Requires Mn(2+) as cofactor.

It localises to the cytoplasm. It carries out the reaction 2 D-alanine + ATP = D-alanyl-D-alanine + ADP + phosphate + H(+). Its pathway is cell wall biogenesis; peptidoglycan biosynthesis. Cell wall formation. The protein is D-alanine--D-alanine ligase of Prochlorococcus marinus (strain MIT 9215).